We begin with the raw amino-acid sequence, 2380 residues long: DNA polymerase epsilon catalytic subunit A (2380 aa).

Residues 169 to 196 (YYNKGNNNNNNHQNYNNNNNQNNNNFNK) show a composition bias toward low complexity. Disordered stretches follow at residues 169–209 (YYNK…NNSK), 1178–1210 (FFEK…QQTD), 1766–1787 (KNTS…NDTT), 1967–1998 (QQQQ…KNKK), and 2059–2120 (KIST…TTTS). Positions 1183-1201 (EDNDQDNDNDNDNDNDNDN) are enriched in acidic residues. The span at 1767–1776 (NTSNNSNTKN) shows a compositional bias: low complexity. Polar residues predominate over residues 1777 to 1787 (GANQNTTNDTT). Residues 1975 to 1991 (NADDDDDDDVSENEEEQ) show a composition bias toward acidic residues. Composition is skewed to low complexity over residues 2059–2081 (KIST…TTKD) and 2110–2120 (SSSSSTTTTTS). Cysteine 2225 and cysteine 2228 together coordinate Zn(2+). A CysA-type zinc finger spans residues 2225 to 2288 (CSSCHSCRDI…RVPELSCIQC (64 aa)). Residues 2245–2258 (ISSRLSSQQKSNNN) are compositionally biased toward low complexity. Residues 2245–2275 (ISSRLSSQQKSNNNDSDDSDDDNEENEGDDD) form a disordered region. Positions 2259–2275 (DSDDSDDDNEENEGDDD) are enriched in acidic residues. Zn(2+)-binding residues include cysteine 2285 and cysteine 2288. Positions 2319, 2322, 2334, and 2337 each coordinate [4Fe-4S] cluster. Positions 2319–2337 (CSKCNDVKSDNLGDICPQC) match the CysB motif motif.

The protein belongs to the DNA polymerase type-B family. Consists of three subunits: pole, pole2 and pole3. [4Fe-4S] cluster serves as cofactor.

It is found in the nucleus. The enzyme catalyses DNA(n) + a 2'-deoxyribonucleoside 5'-triphosphate = DNA(n+1) + diphosphate. Its function is as follows. DNA polymerase II participates in chromosomal DNA replication. The sequence is that of DNA polymerase epsilon catalytic subunit A (pole) from Dictyostelium discoideum (Social amoeba).